We begin with the raw amino-acid sequence, 362 residues long: S-adenosylmethionine decarboxylase proenzyme 2 (362 aa).

Catalysis depends on residues E9 and E12. Position 68 (E68) interacts with substrate. Residue S69 is the Schiff-base intermediate with substrate; via pyruvic acid of the active site. S69 is subject to Pyruvic acid (Ser); by autocatalysis. Residue C83 is the Proton donor; for catalytic activity of the active site. Active-site proton acceptor; for processing activity residues include S232 and H245. E249 is a substrate binding site.

Belongs to the eukaryotic AdoMetDC family. Pyruvate is required as a cofactor. Is synthesized initially as an inactive proenzyme. Formation of the active enzyme involves a self-maturation process in which the active site pyruvoyl group is generated from an internal serine residue via an autocatalytic post-translational modification. Two non-identical subunits are generated from the proenzyme in this reaction, and the pyruvate is formed at the N-terminus of the alpha chain, which is derived from the carboxyl end of the proenzyme. The post-translation cleavage follows an unusual pathway, termed non-hydrolytic serinolysis, in which the side chain hydroxyl group of the serine supplies its oxygen atom to form the C-terminus of the beta chain, while the remainder of the serine residue undergoes an oxidative deamination to produce ammonia and the pyruvoyl group blocking the N-terminus of the alpha chain.

It carries out the reaction S-adenosyl-L-methionine + H(+) = S-adenosyl 3-(methylsulfanyl)propylamine + CO2. The protein operates within amine and polyamine biosynthesis; S-adenosylmethioninamine biosynthesis; S-adenosylmethioninamine from S-adenosyl-L-methionine: step 1/1. Essential for biosynthesis of the polyamines spermidine and spermine. Essential for polyamine homeostasis, and normal plant embryogenesis, growth and development. The chain is S-adenosylmethionine decarboxylase proenzyme 2 from Arabidopsis thaliana (Mouse-ear cress).